Here is a 457-residue protein sequence, read N- to C-terminus: Dynein regulatory complex protein 10 (457 aa).

Coiled coils occupy residues 101 to 127, 209 to 258, and 292 to 381; these read EKASILQRKQKELEKGEEAEEDWDQER, IQDI…LHQV, and QQDI…AESE. The region spanning 397–426 is the IQ domain; sequence MVRAATLIQAMWKGYLVRSMLRSRKKKRVK. A disordered region spans residues 419 to 457; sequence SRKKKRVKSKGKDKGKGKEKPKEEKGKEKKAKGKGKGKK. Residues 428–445 show a composition bias toward basic and acidic residues; the sequence is KGKDKGKGKEKPKEEKGK. A compositionally biased stretch (basic residues) spans 446–457; that stretch reads EKKAKGKGKGKK.

This sequence belongs to the DRC10 family. Component of the nexin-dynein regulatory complex (N-DRC). Interacts with CFAP52.

The protein resides in the cytoplasm. The protein localises to the cytoskeleton. It is found in the flagellum axoneme. Component of the nexin-dynein regulatory complex (N-DRC), a key regulator of ciliary/flagellar motility which maintains the alignment and integrity of the distal axoneme and regulates microtubule sliding in motile axonemes. The chain is Dynein regulatory complex protein 10 (Iqcd) from Rattus norvegicus (Rat).